Here is a 970-residue protein sequence, read N- to C-terminus: MATRGHVQDPNDRRLRPIYDYLDNGNNKMAIQQADKLLKKHRDLHCAKVLKAIGLQRTGRQEEAFTLAQEVAALEPTDDNSLQALTILYREMHRPELVTKLYEAAVKKVPNSEEYHSHLFMAYARVGEYKKMQQAGMALYKIVPKNPYYFWSVMSLIMQSISARDENLSKTMFLPLAERMVEKMVKEDKIEAEAEVELYYMILERLGKYQEALDVIRGKLGEKLTSEIQSRENKCMAMYKKLSKWPECNALSRRLLLKNSDDWQFYLTYFDSVFRLIEEAWTPPAEGEHSLEGEVHCSAEDAVKFIEDRITEASQSSRHVRGPHLAKLELIRRLRSQGCNDEFRLGDPEELMFQYFKKFGDKPCCFTDLKVFVDLLPAAQCTQFINQLLGVVPLSTPTEDKLALPADIRGLQQHLCVVQLTRLLGLYHSMDKNQKLDVVRELMLRYQHGLEFGRSCLKTELQFSDYYCLLAVHVLIDIWREAGEETAVWQALTLLEEGLTHSPSNAQFKLLLVRIYCVLGAFEPVVDLYSSLDAKHIQHDTIGYLLTRYAASLGQYAAASQSCNFALRFFHSNQKDTSEYIIQAYKYGAFEKIPEFIAFRNRLNNSLHFAQVRTERMLLDLLLEANISTSLAESIKSMNLRPEEDDVPWEDLRDNRDLDVFFSWDPKDRNVSEEHKKLSLEEETMWLRIRSLTLRLISALPSLTHPVEPRNSEKTSENGVSSRVDVLRLLLQQLEVAVETGKRFIEKEIQYPFLGPVPTRMGRFFSSGCCQCQVHSFHLVSDVYELDTSGLEGTVDIQERIENSLASLLELLKGVFSTCKGDLLEVKDGNVKTQPAVLENLVFFVETISIVLWVSSYCESVLRPYKLNIQKKKKKKKETSIVMPPIFTSFQDYVTGLQTVISNAVDHIKGLEAHLIALKLEELTLEDTSISPVNLSNCHVLSVRRRDPGSYWKLGAVEPMCADVCPSVQI.

TPR repeat units lie at residues 11 to 44, 45 to 78, 79 to 112, and 114 to 146; these read NDRR…HRDL, HCAK…EPTD, DNSL…VPNS, and EYHS…VPKN.

The protein belongs to the MDM20/NAA25 family. In terms of assembly, component of the N-terminal acetyltransferase B (NatB) complex which is composed of NAA20 and NAA25.

Its subcellular location is the cytoplasm. Functionally, non-catalytic subunit of the NatB complex which catalyzes acetylation of the N-terminal methionine residues of peptides beginning with Met-Asp, Met-Glu, Met-Asn and Met-Gln. May play a role in normal cell-cycle progression. The polypeptide is N-alpha-acetyltransferase 25, NatB auxiliary subunit (Naa25) (Rattus norvegicus (Rat)).